The sequence spans 562 residues: Protein wntless (562 aa).

Topologically, residues 1–13 are cytoplasmic; the sequence is MSGTILENLSGRK. The helical transmembrane segment at 14–34 threads the bilayer; the sequence is LSILVTTLLLCQVLCFLLGGL. At 35–239 the chain is on the lumenal side; it reads YAPLPAGHVT…AIHQNGGFTQ (205 aa). Asn58 carries N-linked (GlcNAc...) asparagine glycosylation. A helical membrane pass occupies residues 240–260; that stretch reads IWLLLKTVLFPFVVGIMIWFW. At 261–270 the chain is on the cytoplasmic side; that stretch reads RRVHLLQRSP. The chain crosses the membrane as a helical span at residues 271 to 291; it reads ALLEYMLIYLGAALTFLNLPL. Residues 292–311 are Lumenal-facing; that stretch reads EYLSLVFEMPYMLLLSDIRQ. A helical transmembrane segment spans residues 312–332; it reads GIFYAMLLTFWLVFAGEHMLI. The Cytoplasmic segment spans residues 333–344; it reads QDAPNKSTIRSR. Residues 345-365 traverse the membrane as a helical segment; sequence YWKHLSAVVVGCISLFVFDIC. Residues 366 to 390 are Lumenal-facing; sequence ERGVQLRNPFYSIWAMPLAAKMAMT. Residues 391 to 411 traverse the membrane as a helical segment; sequence FIVLAGVSAAIYFLFLCYMIW. The Cytoplasmic segment spans residues 412-441; sequence KVFRNIGDKRTSLPSMSQARRLHYESLIYR. Residues 442–462 form a helical membrane-spanning segment; sequence FKFLMLATIVCAALTVTGFIM. Over 463-482 the chain is Lumenal; the sequence is GQRAEGQWDWNDNVAIQPTS. A helical membrane pass occupies residues 483–503; sequence AFLTGVYGMWNIYIFALLILY. At 504–562 the chain is on the cytoplasmic side; the sequence is APSHKQWPTMHHSDETTQSNENIVASAASEEIEFSHLPSDSNPSEISSLTSFTRKVAFD. The tract at residues 539 to 562 is disordered; it reads HLPSDSNPSEISSLTSFTRKVAFD. The span at 541–556 shows a compositional bias: polar residues; it reads PSDSNPSEISSLTSFT.

The protein belongs to the wntless family. In terms of assembly, interacts with wg; in the Golgi. Interacts with Vps35, a component of the retromer complex; wls stability is regulated by Vps35.

Its subcellular location is the presynaptic cell membrane. It is found in the postsynaptic cell membrane. The protein localises to the cell membrane. It localises to the endoplasmic reticulum membrane. The protein resides in the endosome membrane. Its subcellular location is the golgi apparatus membrane. In terms of biological role, a segment polarity gene required for wingless (wg)-dependent patterning processes, acting in both wg-sending cells and wg-target cells. In non-neuronal cells wls directs wg secretion. The wls traffic loop encompasses the Golgi, the cell surface, an endocytic compartment and a retrograde route leading back to the Golgi, and involves clathrin-mediated endocytosis and the retromer complex (a conserved protein complex consisting of Vps35 and Vps26). In neuronal cells (the larval motorneuron NMJ), the wg signal moves across the synapse via the release of wls-containing exosome-like vesicles. Postsynaptic wls is required for the trafficking of fz2 through the fz2-interacting protein Grip. In Drosophila erecta (Fruit fly), this protein is Protein wntless.